A 185-amino-acid polypeptide reads, in one-letter code: Ribosome-recycling factor (185 aa).

Belongs to the RRF family.

The protein localises to the cytoplasm. Its function is as follows. Responsible for the release of ribosomes from messenger RNA at the termination of protein biosynthesis. May increase the efficiency of translation by recycling ribosomes from one round of translation to another. The protein is Ribosome-recycling factor of Thermotoga petrophila (strain ATCC BAA-488 / DSM 13995 / JCM 10881 / RKU-1).